The primary structure comprises 377 residues: Guanine nucleotide-binding protein subunit beta (377 aa).

7 WD repeats span residues 63–93, 105–135, 154–185, 202–233, 246–276, 293–323, and 339–369; these read GHTG…IVWN, LPCA…SIFN, GHKG…VLWD, GHTA…RLWD, CHEG…RLFD, GDIP…YVWD, and SHEG…KIWA.

It belongs to the WD repeat G protein beta family. In terms of assembly, g proteins are composed of 3 units, alpha, beta and gamma.

It is found in the cell membrane. The protein resides in the endoplasmic reticulum membrane. Its function is as follows. Guanine nucleotide-binding proteins (G proteins) are involved as a modulator or transducer in various transmembrane signaling systems. The beta and gamma chains are required for the GTPase activity, for replacement of GDP by GTP, and for G protein-effector interaction. This chain is Guanine nucleotide-binding protein subunit beta, found in Nicotiana plumbaginifolia (Leadwort-leaved tobacco).